Reading from the N-terminus, the 426-residue chain is Phosphomethylpyrimidine synthase (426 aa).

Residues asparagine 65, methionine 94, tyrosine 123, histidine 162, 184–186 (SRG), 225–228 (DGMR), and glutamate 264 contribute to the substrate site. Histidine 268 lines the Zn(2+) pocket. Residue tyrosine 291 participates in substrate binding. Histidine 332 is a binding site for Zn(2+). Residues cysteine 408, cysteine 411, and cysteine 415 each contribute to the [4Fe-4S] cluster site.

This sequence belongs to the ThiC family. Requires [4Fe-4S] cluster as cofactor.

It carries out the reaction 5-amino-1-(5-phospho-beta-D-ribosyl)imidazole + S-adenosyl-L-methionine = 4-amino-2-methyl-5-(phosphooxymethyl)pyrimidine + CO + 5'-deoxyadenosine + formate + L-methionine + 3 H(+). The protein operates within cofactor biosynthesis; thiamine diphosphate biosynthesis. Its function is as follows. Catalyzes the synthesis of the hydroxymethylpyrimidine phosphate (HMP-P) moiety of thiamine from aminoimidazole ribotide (AIR) in a radical S-adenosyl-L-methionine (SAM)-dependent reaction. The protein is Phosphomethylpyrimidine synthase of Methanococcus maripaludis (strain C6 / ATCC BAA-1332).